The chain runs to 76 residues: Neuromacin-like protein (76 aa).

4 disulfide bridges follow: Cys-18–Cys-25, Cys-40–Cys-44, Cys-54–Cys-61, and Cys-72–Cys-74.

Belongs to the macin family.

The protein localises to the secreted. This chain is Neuromacin-like protein, found in Aplysia californica (California sea hare).